Consider the following 247-residue polypeptide: tRNA pseudouridine synthase A (247 aa).

Catalysis depends on Asp52, which acts as the Nucleophile. Tyr113 contributes to the substrate binding site.

This sequence belongs to the tRNA pseudouridine synthase TruA family. Homodimer.

The catalysed reaction is uridine(38/39/40) in tRNA = pseudouridine(38/39/40) in tRNA. Formation of pseudouridine at positions 38, 39 and 40 in the anticodon stem and loop of transfer RNAs. This is tRNA pseudouridine synthase A from Bartonella henselae (strain ATCC 49882 / DSM 28221 / CCUG 30454 / Houston 1) (Rochalimaea henselae).